The chain runs to 99 residues: Microcin E492 (99 aa).

Positions 1 to 15 (MREISQKDLNLAFGA) are cleaved as a signal peptide. The segment at 80–99 (SWNGSGSGYNSATSSSGSGS) is disordered. Low complexity predominate over residues 87–99 (GYNSATSSSGSGS). The residue at position 99 (Ser-99) is a Serine microcin E492 siderophore ester.

It belongs to the class IIa microcin family. In terms of assembly, multimer. Possibly forms a homodimer or a homotrimer. In terms of processing, the C-terminal Ser is modified by attachment to a siderophore similar to enterobactin, which can bind one atom of iron. The modification consists of an ester linkage of the serine carboxyl to O6 of a glucose which is linked by a C-glycosidic bond to the 5'-benzoyl of a linear triester of N-(2,3-dihydroxybenzoyl)serine. Presence of the siderophore ester increases the antibacterial activity of the protein.

Functionally, channel-forming bacteriocin. Forms cation-selective channels. Active on enterobacteria, with highest activity against E.coli. Not active on other Gram-negative bacteria, Gram-positive bacteria or fungi. The unmodified protein is active against E.coli and S.enteritidis. When the siderophore ester is present at Ser-99, antibacterial activity against these species is increased and activity is also detected against E.cloacae and K.pneumoniae. Neutralized by its immunity protein MceB. This Klebsiella pneumoniae protein is Microcin E492.